The primary structure comprises 842 residues: Glucans biosynthesis glucosyltransferase H (842 aa).

Transmembrane regions (helical) follow at residues 140-160, 194-214, 513-533, 570-590, 615-635, 656-676, and 680-700; these read ILLL…KTIL, ILIL…TALM, VFLT…FLAL, LFAS…MLIW, VLLA…AFLG, FMRH…MAWL, and FLFW…VSVV.

Belongs to the glycosyltransferase 2 family. OpgH subfamily.

It is found in the cell inner membrane. The protein operates within glycan metabolism; osmoregulated periplasmic glucan (OPG) biosynthesis. In terms of biological role, involved in the biosynthesis of osmoregulated periplasmic glucans (OPGs). The sequence is that of Glucans biosynthesis glucosyltransferase H from Citrobacter koseri (strain ATCC BAA-895 / CDC 4225-83 / SGSC4696).